We begin with the raw amino-acid sequence, 65 residues long: Small ribosomal subunit protein eS27 (65 aa).

The Zn(2+) site is built by C20, C23, C39, and C42. The C4-type zinc-finger motif lies at 20–42 (CIDCGNEQIVFSHPATRVRCNVC).

It belongs to the eukaryotic ribosomal protein eS27 family. As to quaternary structure, part of the 30S ribosomal subunit. The cofactor is Zn(2+).

This is Small ribosomal subunit protein eS27 from Pyrococcus abyssi (strain GE5 / Orsay).